Here is a 203-residue protein sequence, read N- to C-terminus: Outer-membrane lipoprotein carrier protein (203 aa).

The N-terminal stretch at 1–20 (MKKWLAISCLIAGMTSTAVY) is a signal peptide.

This sequence belongs to the LolA family. As to quaternary structure, monomer.

The protein resides in the periplasm. Functionally, participates in the translocation of lipoproteins from the inner membrane to the outer membrane. Only forms a complex with a lipoprotein if the residue after the N-terminal Cys is not an aspartate (The Asp acts as a targeting signal to indicate that the lipoprotein should stay in the inner membrane). The protein is Outer-membrane lipoprotein carrier protein of Pectobacterium carotovorum subsp. carotovorum (strain PC1).